Reading from the N-terminus, the 761-residue chain is Probable ubiquitin carboxyl-terminal hydrolase creB (761 aa).

A disordered region spans residues 1 to 45 (MGSFLRSFRHNGGSTAPSVGAVPAKKEPQPPPMTPLEKRLLDMGP). Over residues 36-45 (LEKRLLDMGP) the composition is skewed to basic and acidic residues. Residues 55–468 (YGMENYGNTC…CAYVLFYQET (414 aa)) enclose the USP domain. The active-site Nucleophile is cysteine 64. Disordered stretches follow at residues 113 to 146 (EAEA…DSPE) and 242 to 269 (PLME…KTPN). The span at 256-269 (SVDQSSSTGSKTPN) shows a compositional bias: polar residues. Histidine 419 (proton acceptor) is an active-site residue. Residues 496 to 761 (LKQNGFPQSP…LRKKSFSILS (266 aa)) form a disordered region. The segment covering 555-566 (PLSPVPPVPPIP) has biased composition (pro residues). Residues 577-640 (KNDALAKREE…ASKAEEDRRL (64 aa)) adopt a coiled-coil conformation. The segment covering 580 to 649 (ALAKREEKER…LSTENGKEKQ (70 aa)) has biased composition (basic and acidic residues). The segment covering 655–666 (RLKRGSKSLSHR) has biased composition (basic residues). Positions 692–710 (SQSGPTSEQQQQQRQQSPP) are enriched in low complexity. Pro residues predominate over residues 712 to 722 (HDQPPNSPQPG). The span at 725 to 743 (TIREDEQVNHKDSKHERTG) shows a compositional bias: basic and acidic residues. The segment covering 744-761 (HGKWRSFSLRKKSFSILS) has biased composition (basic residues).

Belongs to the peptidase C19 family. Interacts with creA, creC and qutD.

It catalyses the reaction Thiol-dependent hydrolysis of ester, thioester, amide, peptide and isopeptide bonds formed by the C-terminal Gly of ubiquitin (a 76-residue protein attached to proteins as an intracellular targeting signal).. Functionally, ubiquitin thioesterase component of the regulatory network controlling carbon source utilization through ubiquitination and deubiquitination involving creA, creB, creC, creD and acrB. Deubiquitinates the creA catabolic repressor and the quinate permease qutD. Also plays a role in response to carbon starvation and the control of extracellular proteases activity. The protein is Probable ubiquitin carboxyl-terminal hydrolase creB (creB) of Neosartorya fischeri (strain ATCC 1020 / DSM 3700 / CBS 544.65 / FGSC A1164 / JCM 1740 / NRRL 181 / WB 181) (Aspergillus fischerianus).